A 273-amino-acid chain; its full sequence is Large ribosomal subunit protein uL2 (273 aa).

The tract at residues 221-273 (RGTAMNPVDHPHGGGEGRNFGKHPVTPWGIQTKGKKTRSNKRTDKFIVRRRSK) is disordered.

This sequence belongs to the universal ribosomal protein uL2 family. As to quaternary structure, part of the 50S ribosomal subunit. Forms a bridge to the 30S subunit in the 70S ribosome.

Its function is as follows. One of the primary rRNA binding proteins. Required for association of the 30S and 50S subunits to form the 70S ribosome, for tRNA binding and peptide bond formation. It has been suggested to have peptidyltransferase activity; this is somewhat controversial. Makes several contacts with the 16S rRNA in the 70S ribosome. This is Large ribosomal subunit protein uL2 from Sodalis glossinidius (strain morsitans).